The sequence spans 464 residues: ATP synthase subunit beta (464 aa).

153-160 is a binding site for ATP; sequence GGAGVGKT.

Belongs to the ATPase alpha/beta chains family. As to quaternary structure, F-type ATPases have 2 components, CF(1) - the catalytic core - and CF(0) - the membrane proton channel. CF(1) has five subunits: alpha(3), beta(3), gamma(1), delta(1), epsilon(1). CF(0) has three main subunits: a(1), b(2) and c(9-12). The alpha and beta chains form an alternating ring which encloses part of the gamma chain. CF(1) is attached to CF(0) by a central stalk formed by the gamma and epsilon chains, while a peripheral stalk is formed by the delta and b chains.

The protein localises to the cell membrane. It catalyses the reaction ATP + H2O + 4 H(+)(in) = ADP + phosphate + 5 H(+)(out). Functionally, produces ATP from ADP in the presence of a proton gradient across the membrane. The catalytic sites are hosted primarily by the beta subunits. This Acetivibrio thermocellus (strain ATCC 27405 / DSM 1237 / JCM 9322 / NBRC 103400 / NCIMB 10682 / NRRL B-4536 / VPI 7372) (Clostridium thermocellum) protein is ATP synthase subunit beta.